The primary structure comprises 231 residues: uncharacterized protein (231 aa).

A helical membrane pass occupies residues 86–106 (LIILFVIGLIITIIGLLMYEP).

It is found in the membrane. This is an uncharacterized protein from Methanocaldococcus jannaschii (strain ATCC 43067 / DSM 2661 / JAL-1 / JCM 10045 / NBRC 100440) (Methanococcus jannaschii).